Reading from the N-terminus, the 448-residue chain is N-succinylarginine dihydrolase (448 aa).

Substrate is bound by residues Gly-19–Ser-28, Asn-110, and His-137–Arg-138. Residue Glu-174 is part of the active site. Arg-214 lines the substrate pocket. The active site involves His-250. The substrate site is built by Asp-252 and Asn-365. Cys-371 (nucleophile) is an active-site residue.

Belongs to the succinylarginine dihydrolase family. In terms of assembly, homodimer.

It catalyses the reaction N(2)-succinyl-L-arginine + 2 H2O + 2 H(+) = N(2)-succinyl-L-ornithine + 2 NH4(+) + CO2. It participates in amino-acid degradation; L-arginine degradation via AST pathway; L-glutamate and succinate from L-arginine: step 2/5. Its function is as follows. Catalyzes the hydrolysis of N(2)-succinylarginine into N(2)-succinylornithine, ammonia and CO(2). This Pseudomonas fluorescens (strain ATCC BAA-477 / NRRL B-23932 / Pf-5) protein is N-succinylarginine dihydrolase.